We begin with the raw amino-acid sequence, 934 residues long: Protocadherin gamma-C3 (934 aa).

An N-terminal signal peptide occupies residues 1–31; sequence MVPEAWRSGLVSTGRVVGVLLLLGALNKAST. Cadherin domains are found at residues 32–135, 136–244, 245–352, 353–457, 458–567, and 572–685; these read VIHY…NPAF, PTQE…APVF, NQSL…APEI, TVTS…PPQS, SQSS…APQV, and PGGS…APRE. Over 32-693 the chain is Extracellular; the sequence is VIHYEIPEER…REQNKNLTFY (662 aa). N-linked (GlcNAc...) asparagine glycosylation is found at asparagine 245, asparagine 424, asparagine 478, asparagine 550, asparagine 615, and asparagine 689. The helical transmembrane segment at 694-714 threads the bilayer; the sequence is LLLSLILVSVGFVVTVFGVII. Residues 715–934 lie on the Cytoplasmic side of the membrane; it reads FKVYKWKQSR…KKKSGKKEKK (220 aa). 2 disordered regions span residues 804–843 and 904–934; these read ESAPPGQQAPPNTDWRFSQAQRPGTSGSQNGDDTGTWPNN and ATLTNAAGKRDGKAPAGGNGNKKKSGKKEKK. A compositionally biased stretch (polar residues) spans 812–843; sequence APPNTDWRFSQAQRPGTSGSQNGDDTGTWPNN. Residues 924–934 are compositionally biased toward basic residues; it reads NKKKSGKKEKK.

It localises to the cell membrane. Functionally, potential calcium-dependent cell-adhesion protein. May be involved in the establishment and maintenance of specific neuronal connections in the brain. This Pan troglodytes (Chimpanzee) protein is Protocadherin gamma-C3 (PCDHGC3).